Reading from the N-terminus, the 366-residue chain is MRVLAAMSGGVDSAVAAARAAEAGHDVTGIHLALSRNPQSYRSGARGCCTIEDSNDARRAADVIGIPFYVWDLSDRFHEDVVEDFMAEYAAGRTPNPCLRCNEKIKFAAVLDRALGLGFDAVATGHYARLVAGADGLVEMHRAVDHGKDQSYVLGVLDQGQLRHSLFPLGGSTKDEVRREAAERGLLVADKPDSHDICFIADGDNAGWLREKLGDRAPHHEGTIVDDDTGEVLGRHEGSYGFTIGQRKGLRIGRPAPDGRPRFVLDIEPVSGTVTVGPHERLAVHRLRGIRPRWCGTVPDRLSGTVQLRAHGEEHRAVLVRDGDEVDIELLEPAYGIAPGQAAVLYDGSRVVGSATISATDRVAAR.

ATP contacts are provided by residues 6–13 and Leu-32; that span reads AMSGGVDS. Catalysis depends on Cys-101, which acts as the Nucleophile. A disulfide bond links Cys-101 and Cys-198. Gly-125 is a binding site for ATP. Residues 148–150 form an interaction with tRNA region; it reads KDQ. Cys-198 acts as the Cysteine persulfide intermediate in catalysis.

Belongs to the MnmA/TRMU family.

The protein resides in the cytoplasm. It catalyses the reaction S-sulfanyl-L-cysteinyl-[protein] + uridine(34) in tRNA + AH2 + ATP = 2-thiouridine(34) in tRNA + L-cysteinyl-[protein] + A + AMP + diphosphate + H(+). Catalyzes the 2-thiolation of uridine at the wobble position (U34) of tRNA, leading to the formation of s(2)U34. This chain is tRNA-specific 2-thiouridylase MnmA, found in Nocardioides sp. (strain ATCC BAA-499 / JS614).